Consider the following 677-residue polypeptide: MTGRVCRGCGGTDIELDAARGDAVCTACGSVLEDNIIVSEVQFVESSGGGSSAVGQFVSLDGAGKTPTLGGGFHVNLGKESRAQTLQNGRRHIHHLGNQLQLNQHCLDTAFNFFKMAVSRHLTRGRKMAHVIAACLYLVCRTEGTPHMLLDLSDLLQVNVYVLGKTFLLLARELCINAPAIDPCLYIPRFAHLLEFGEKNHEVSMTALRLLQRMKRDWMHTGRRPSGLCGAALLVAARMHDFRRTVKEVISVVKVCESTLRKRLTEFEDTPTSQLTIDEFMKIDLEEECDPPSYTAGQRKLRMKQLEQVLSKKLEEVEGEISSYQDAIEIELENSRPKAKGGLASLAKDGSTEDTASSLCGEEDTEDEELEAAASHLNKDLYRELLGGAPGSSEAAGSPEWGGRPPALGSLLDPLPTAASLGISDSIRECISSQSSDPKDASGDGELDLSGIDDLEIDRYILNESEARVKAELWMRENAEYLREQREKEARIAKEKELGIYKEHKPKKSCKRREPIQASTAREAIEKMLEQKKISSKINYSVLRGLSSAGGGSPHREDAQPEHSASARKLSRRRTPASRSGADPVTSVGKRLRPLVSTQPAKKVATGEALLPSSPTLGAEPARPQAVLVESGPVSYHADEEADEEEPDEEDGEPCVSALQMMGSNDYGCDGDEDDGY.

The TFIIB-type zinc finger occupies 2-33 (TGRVCRGCGGTDIELDAARGDAVCTACGSVLE). Residues Cys-6, Cys-9, Cys-25, and Cys-28 each contribute to the Zn(2+) site. 2 consecutive repeat copies span residues 91–172 (RHIH…LLAR) and 185–269 (LYIP…EFED). Disordered regions lie at residues 340-368 (KGGL…TEDE) and 385-413 (LLGG…SLLD). Thr-365 bears the Phosphothreonine mark. Position 450 is a phosphoserine (Ser-450). 2 disordered regions span residues 501 to 521 (YKEH…ASTA) and 544 to 653 (RGLS…EDGE). Ser-553 is modified (phosphoserine). The segment covering 640–653 (EEADEEEPDEEDGE) has biased composition (acidic residues).

Belongs to the TFIIB family. TFIIIB comprises at least the TATA-binding protein (TBP) and the B-related factor 1 (BRF1/TFIIIB90). Interacts with BDP1. Interacts with MAF1.

It is found in the nucleus. In terms of biological role, general activator of RNA polymerase which utilizes different TFIIIB complexes at structurally distinct promoters. The isoform 1 is involved in the transcription of tRNA, adenovirus VA1, 7SL and 5S RNA. Isoform 2 is required for transcription of the U6 promoter. The protein is Transcription factor IIIB 90 kDa subunit (BRF1) of Homo sapiens (Human).